The primary structure comprises 279 residues: Oxygen-dependent coproporphyrinogen-III oxidase (279 aa).

S102 serves as a coordination point for substrate. H106 and H116 together coordinate a divalent metal cation. H116 functions as the Proton donor in the catalytic mechanism. 118 to 120 (NTR) lines the substrate pocket. 2 residues coordinate a divalent metal cation: H149 and H179. The segment at 244-279 (YVEFNLLYDRGTKFGLMTDGNVEAILMSLPPEVKFN) is important for dimerization.

The protein belongs to the aerobic coproporphyrinogen-III oxidase family. Homodimer. A divalent metal cation serves as cofactor.

The protein resides in the cytoplasm. It catalyses the reaction coproporphyrinogen III + O2 + 2 H(+) = protoporphyrinogen IX + 2 CO2 + 2 H2O. It participates in porphyrin-containing compound metabolism; protoporphyrin-IX biosynthesis; protoporphyrinogen-IX from coproporphyrinogen-III (O2 route): step 1/1. In terms of biological role, involved in the heme biosynthesis. Catalyzes the aerobic oxidative decarboxylation of propionate groups of rings A and B of coproporphyrinogen-III to yield the vinyl groups in protoporphyrinogen-IX. The protein is Oxygen-dependent coproporphyrinogen-III oxidase of Rickettsia rickettsii (strain Iowa).